The primary structure comprises 78 residues: Acyl carrier protein (78 aa).

A Carrier domain is found at 2 to 77 (SDTVERVKKI…DAVKFIDKAS (76 aa)). An O-(pantetheine 4'-phosphoryl)serine modification is found at S37.

Belongs to the acyl carrier protein (ACP) family. Post-translationally, 4'-phosphopantetheine is transferred from CoA to a specific serine of apo-ACP by AcpS. This modification is essential for activity because fatty acids are bound in thioester linkage to the sulfhydryl of the prosthetic group.

The protein resides in the cytoplasm. Its pathway is lipid metabolism; fatty acid biosynthesis. Its function is as follows. Carrier of the growing fatty acid chain in fatty acid biosynthesis. The sequence is that of Acyl carrier protein from Bartonella quintana (strain Toulouse) (Rochalimaea quintana).